Reading from the N-terminus, the 347-residue chain is Selenide, water dikinase (347 aa).

C17 is a catalytic residue. Residues K20 and 48-50 (TRD) contribute to the ATP site. A Mg(2+)-binding site is contributed by D51. ATP is bound by residues D68, D91, and 139–141 (GHS). Residue D91 coordinates Mg(2+). Residue D227 participates in Mg(2+) binding.

This sequence belongs to the selenophosphate synthase 1 family. Class I subfamily. As to quaternary structure, homodimer. Requires Mg(2+) as cofactor.

The enzyme catalyses hydrogenselenide + ATP + H2O = selenophosphate + AMP + phosphate + 2 H(+). Synthesizes selenophosphate from selenide and ATP. This Shigella flexneri serotype 5b (strain 8401) protein is Selenide, water dikinase.